A 157-amino-acid chain; its full sequence is Small ribosomal subunit protein uS7 (157 aa).

This sequence belongs to the universal ribosomal protein uS7 family. In terms of assembly, part of the 30S ribosomal subunit. Contacts proteins S9 and S11.

Functionally, one of the primary rRNA binding proteins, it binds directly to 16S rRNA where it nucleates assembly of the head domain of the 30S subunit. Is located at the subunit interface close to the decoding center, probably blocks exit of the E-site tRNA. The sequence is that of Small ribosomal subunit protein uS7 from Stenotrophomonas maltophilia (strain R551-3).